The primary structure comprises 82 residues: Three-finger toxin MALT0063C (82 aa).

Residues 1–21 (MRTLLLTLVVVTIVCLDLGNS) form the signal peptide. 4 disulfide bridges follow: cysteine 24–cysteine 42, cysteine 35–cysteine 60, cysteine 64–cysteine 72, and cysteine 73–cysteine 78.

The protein belongs to the three-finger toxin family. Short-chain subfamily. In terms of tissue distribution, expressed by the venom gland.

The protein localises to the secreted. This is Three-finger toxin MALT0063C from Micrurus altirostris (Uruguayan coral snake).